Consider the following 261-residue polypeptide: Carnitinyl-CoA dehydratase (261 aa).

The active-site Nucleophile is glutamate 111. Glutamate 131 functions as the Proton acceptor in the catalytic mechanism.

This sequence belongs to the enoyl-CoA hydratase/isomerase family.

The enzyme catalyses (R)-carnitinyl-CoA = crotonobetainyl-CoA + H2O. It participates in amine and polyamine metabolism; carnitine metabolism. Its function is as follows. Catalyzes the reversible dehydration of L-carnitinyl-CoA to crotonobetainyl-CoA. This chain is Carnitinyl-CoA dehydratase, found in Escherichia coli O157:H7.